Reading from the N-terminus, the 47-residue chain is KDCKRESNTFPGICITKPPCRKACIREKFTDGHCSKILRRCLCTKPC.

4 cysteine pairs are disulfide-bonded: C3–C47, C14–C34, C20–C41, and C24–C43. K4, H33, K36, and R39 together coordinate a 1,2-diacyl-sn-glycero-3-phosphate.

Belongs to the DEFL family. In terms of assembly, in the presence of phosphatidic acid (PA), forms right-handed double helices which tend to bundle into fibrils. Each helix is a repetition of dimers containing 2 bound molecules of PA per dimer. Dimers are arranged orthogonally in a tip-to-tip configuration with 1 molecule of PA located at the dimer contact interface. Association of 2 helices to form a double helix depends on intercalating isoleucine residues Ile-15 and Ile-37. Bundling of double helices into fibrils depends on Arg-26.

It is found in the vacuole. Plant defense peptide. Disrupts membranes containing phosphatidic acid (PA) via a PA-dependent oligomerization process. The chain is Defensin NsD7 from Nicotiana suaveolens (Australian tobacco).